The sequence spans 292 residues: Ribosomal protein L11 methyltransferase (292 aa).

The S-adenosyl-L-methionine site is built by threonine 145, glycine 166, aspartate 188, and asparagine 229.

It belongs to the methyltransferase superfamily. PrmA family.

Its subcellular location is the cytoplasm. It carries out the reaction L-lysyl-[protein] + 3 S-adenosyl-L-methionine = N(6),N(6),N(6)-trimethyl-L-lysyl-[protein] + 3 S-adenosyl-L-homocysteine + 3 H(+). Methylates ribosomal protein L11. In Alteromonas mediterranea (strain DSM 17117 / CIP 110805 / LMG 28347 / Deep ecotype), this protein is Ribosomal protein L11 methyltransferase.